Here is a 60-residue protein sequence, read N- to C-terminus: Small ribosomal subunit protein bS21 (60 aa).

A disordered region spans residues 38-60 (KGVKRREKEKAARKRLQKKHRMY).

It belongs to the bacterial ribosomal protein bS21 family.

The protein is Small ribosomal subunit protein bS21 of Mycoplasmoides gallisepticum (strain R(low / passage 15 / clone 2)) (Mycoplasma gallisepticum).